A 94-amino-acid chain; its full sequence is Integration host factor subunit beta (94 aa).

It belongs to the bacterial histone-like protein family. As to quaternary structure, heterodimer of an alpha and a beta chain.

In terms of biological role, this protein is one of the two subunits of integration host factor, a specific DNA-binding protein that functions in genetic recombination as well as in transcriptional and translational control. The sequence is that of Integration host factor subunit beta (ihfB) from Pasteurella multocida (strain Pm70).